The sequence spans 276 residues: Phosphonates import ATP-binding protein PhnC (276 aa).

The ABC transporter domain maps to 5 to 253 (IRVERLNKTF…LLNDLYGADL (249 aa)). 37–44 (GASGSGKS) lines the ATP pocket.

Belongs to the ABC transporter superfamily. Phosphonates importer (TC 3.A.1.9.1) family. In terms of assembly, the complex is composed of two ATP-binding proteins (PhnC), two transmembrane proteins (PhnE) and a solute-binding protein (PhnD).

Its subcellular location is the cell inner membrane. It catalyses the reaction phosphonate(out) + ATP + H2O = phosphonate(in) + ADP + phosphate + H(+). Its function is as follows. Part of the ABC transporter complex PhnCDE involved in phosphonates import. Responsible for energy coupling to the transport system. The chain is Phosphonates import ATP-binding protein PhnC from Stutzerimonas stutzeri (Pseudomonas stutzeri).